A 446-amino-acid chain; its full sequence is Ribulose bisphosphate carboxylase large chain (446 aa).

Substrate-binding residues include N89 and T139. Residue K141 is the Proton acceptor of the active site. Position 143 (K143) interacts with substrate. Residues K167, D169, and E170 each coordinate Mg(2+). K167 carries the N6-carboxylysine modification. H260 serves as the catalytic Proton acceptor. Substrate contacts are provided by R261, H293, and S345.

The protein belongs to the RuBisCO large chain family. Type I subfamily. As to quaternary structure, heterohexadecamer of 8 large chains and 8 small chains; disulfide-linked. The disulfide link is formed within the large subunit homodimers. The cofactor is Mg(2+). The disulfide bond which can form in the large chain dimeric partners within the hexadecamer appears to be associated with oxidative stress and protein turnover.

It is found in the plastid. The protein localises to the chloroplast. The catalysed reaction is 2 (2R)-3-phosphoglycerate + 2 H(+) = D-ribulose 1,5-bisphosphate + CO2 + H2O. It catalyses the reaction D-ribulose 1,5-bisphosphate + O2 = 2-phosphoglycolate + (2R)-3-phosphoglycerate + 2 H(+). In terms of biological role, ruBisCO catalyzes two reactions: the carboxylation of D-ribulose 1,5-bisphosphate, the primary event in carbon dioxide fixation, as well as the oxidative fragmentation of the pentose substrate in the photorespiration process. Both reactions occur simultaneously and in competition at the same active site. This chain is Ribulose bisphosphate carboxylase large chain, found in Exacum affine (Persian violet).